The sequence spans 241 residues: Large ribosomal subunit protein uL3 (241 aa).

It belongs to the universal ribosomal protein uL3 family. As to quaternary structure, part of the 50S ribosomal subunit. Forms a cluster with proteins L14 and L19.

One of the primary rRNA binding proteins, it binds directly near the 3'-end of the 23S rRNA, where it nucleates assembly of the 50S subunit. This is Large ribosomal subunit protein uL3 from Aquifex aeolicus (strain VF5).